The chain runs to 279 residues: Vitamin B12-binding protein (279 aa).

Residues 1-20 (MTFRFLCWLTGLLLCTAAYA) form the signal peptide. One can recognise a Fe/B12 periplasmic-binding domain in the interval 24–276 (RVISLAPHAT…QLAELKLAPS (253 aa)). C189 and C265 form a disulfide bridge.

It belongs to the BtuF family. As to quaternary structure, the complex is composed of two ATP-binding proteins (BtuD), two transmembrane proteins (BtuC) and a solute-binding protein (BtuF).

The protein resides in the periplasm. Part of the ABC transporter complex BtuCDF involved in vitamin B12 import. Binds vitamin B12 and delivers it to the periplasmic surface of BtuC. The protein is Vitamin B12-binding protein of Pectobacterium atrosepticum (strain SCRI 1043 / ATCC BAA-672) (Erwinia carotovora subsp. atroseptica).